We begin with the raw amino-acid sequence, 230 residues long: RNA-binding riboflavin kinase RibR (230 aa).

It belongs to the RibR family.

The enzyme catalyses riboflavin + ATP = FMN + ADP + H(+). In terms of biological role, may be directly involved in the regulation of the rib genes. C-terminal part of RibR specifically binds to RFN of the rib leader of the riboflavin biosynthetic operon. The RFN element is a sequence within the rib-leader mRNA reported to serve as a receptor for an FMN-dependent riboswitch. Possibly, RibR produces the comodulator FMN through its own N-terminal flavokinase activity. FMN-activated RibR may stabilize the anti-anti terminator structure of RFN mRNA, causing transcription termination of the rib genes in trans. This chain is RNA-binding riboflavin kinase RibR (ribR), found in Bacillus subtilis (strain 168).